Consider the following 289-residue polypeptide: 4-diphosphocytidyl-2-C-methyl-D-erythritol kinase (289 aa).

Lys-11 is an active-site residue. ATP is bound at residue 96 to 106 (PVAAGIGGGSS). Asp-138 is an active-site residue.

The protein belongs to the GHMP kinase family. IspE subfamily.

It carries out the reaction 4-CDP-2-C-methyl-D-erythritol + ATP = 4-CDP-2-C-methyl-D-erythritol 2-phosphate + ADP + H(+). Its pathway is isoprenoid biosynthesis; isopentenyl diphosphate biosynthesis via DXP pathway; isopentenyl diphosphate from 1-deoxy-D-xylulose 5-phosphate: step 3/6. Catalyzes the phosphorylation of the position 2 hydroxy group of 4-diphosphocytidyl-2C-methyl-D-erythritol. The chain is 4-diphosphocytidyl-2-C-methyl-D-erythritol kinase from Azorhizobium caulinodans (strain ATCC 43989 / DSM 5975 / JCM 20966 / LMG 6465 / NBRC 14845 / NCIMB 13405 / ORS 571).